Consider the following 132-residue polypeptide: Small ribosomal subunit protein uS8 (132 aa).

The protein belongs to the universal ribosomal protein uS8 family. In terms of assembly, part of the 30S ribosomal subunit. Contacts proteins S5 and S12.

One of the primary rRNA binding proteins, it binds directly to 16S rRNA central domain where it helps coordinate assembly of the platform of the 30S subunit. The sequence is that of Small ribosomal subunit protein uS8 from Rhodopseudomonas palustris (strain HaA2).